Here is a 1265-residue protein sequence, read N- to C-terminus: Nestin (1265 aa).

A head region spans residues 1–16; sequence MELLGVRQPFGPQFQE. Residues 17–52 form a coil 1A region; that stretch reads EKYQMLELNHRLESYLGRVKLLEEENKLLREEIHTL. The 308-residue stretch at 17-324 folds into the IF rod domain; sequence EKYQMLELNH…ALLDSEGLRI (308 aa). Residues 53-64 are linker 1; that stretch reads KSSRDPAGQRKA. The interval 65-160 is coil 1B; that stretch reads QEEALSQARR…QVHQENMETM (96 aa). The interval 161–183 is linker 12; sequence QASLKQTKQVLMAPQRVQATSIP. The tract at residues 184 to 203 is coil 2A; it reads DLGQEYGYKAAQAWQEAANN. Positions 204–206 are linker 2; the sequence is YQK. The interval 207–324 is coil 2B; that stretch reads QVGRLEESLN…ALLDSEGLRI (118 aa). The tract at residues 325–1265 is tail; sequence DRPTPNKTSS…EGDSWSSGDE (941 aa). Residues 383-402 show a composition bias toward polar residues; that stretch reads PSWTLTRGTPQRPPSSTSMT. Disordered stretches follow at residues 383-521, 667-830, 863-1073, 1093-1116, and 1232-1265; these read PSWT…TEVS, FEVE…PDME, HESL…KASQ, AQTTHASMDEHSSISPVNENLESS, and IRDDKQKDGQPAQSKIVQSDDSADEGDSWSSGDE. Residues 403 to 418 show a composition bias toward basic and acidic residues; that stretch reads EKTEDHISEETKRSAE. Polar residues predominate over residues 422-441; the sequence is DQLQQEKVQQDWTLESTLPK. Residues 444–459 are compositionally biased toward basic and acidic residues; that stretch reads AEPKPELQPEEIKVED. The span at 479–496 shows a compositional bias: polar residues; the sequence is LTSVPAEQQGSMSQTPET. 2 stretches are compositionally biased toward acidic residues: residues 508–520 and 730–739; these read EVSEDGKDEDTEV and LNEDQSEAEE. Basic and acidic residues-rich tracts occupy residues 784-796, 803-819, and 863-897; these read YKSDEETSHHIGE, EKERIDQGHLNEKRFNT, and HESLDVVVQESERKGNLEKEDSGDADNMRDNKEED. Polar residues predominate over residues 901 to 910; the sequence is FEQNENQQLT. Residues 911 to 935 show a composition bias toward basic and acidic residues; it reads EHQHVHTEQVEDKPVHSHETQEHVN. Over residues 943–956 the composition is skewed to low complexity; the sequence is SERSQQEQLEESSL. The segment covering 1015–1043 has biased composition (polar residues); that stretch reads PNASQCFQNTSLLAAATPNEQPLTFTNEV. A compositionally biased stretch (basic and acidic residues) spans 1061–1070; it reads SEEKSTDEPK. Composition is skewed to polar residues over residues 1105 to 1116 and 1242 to 1251; these read SISPVNENLESS and PAQSKIVQSD. Acidic residues predominate over residues 1252-1265; it reads DSADEGDSWSSGDE.

The protein belongs to the intermediate filament family. As to quaternary structure, forms homodimers and homotetramers in vitro. In mixtures with other intermediate filament proteins such as vimentin and alpha-internexin, preferentially forms heterodimers. In terms of tissue distribution, widely expressed throughout the developing nervous system at 24 hours post-fertilization (hpf). As development progresses, expression becomes restricted to proliferative zones of the developing and postembryonic central nervous system. In the peripheral nervous system, expressed in the cranial ganglia. Also expressed in mesodermal muscle precursor cells and in cranial mesenchymal tissue.

Promotes the disassembly of phosphorylated vimentin intermediate filaments (IF) during mitosis and may play a role in the trafficking and distribution of IF proteins and other cellular factors to daughter cells during progenitor cell division. Required for survival, renewal and mitogen-stimulated proliferation of neural progenitor cells. Required for brain and eye development. The protein is Nestin (nes) of Danio rerio (Zebrafish).